The chain runs to 90 residues: N(2)-fixation sustaining protein CowN (90 aa).

This sequence belongs to the CowN family.

Is required to sustain N(2)-dependent growth in the presence of low levels of carbon monoxide (CO). Probably acts by protecting the N(2) fixation ability of the nitrogenase complex, which is inactivated in the presence of CO. This Methylocella silvestris (strain DSM 15510 / CIP 108128 / LMG 27833 / NCIMB 13906 / BL2) protein is N(2)-fixation sustaining protein CowN.